Consider the following 215-residue polypeptide: Cytochrome b6 (215 aa).

A helical transmembrane segment spans residues 32–52; it reads IFYCLGGITLTCFLVQVATGF. Cysteine 35 lines the heme c pocket. Residues histidine 86 and histidine 100 each contribute to the heme b site. 3 helical membrane passes run 90-110, 116-136, and 186-206; these read ASMM…TGGF, LTWV…VTGY, and LHTF…FLMI. Residues histidine 187 and histidine 202 each coordinate heme b.

The protein belongs to the cytochrome b family. PetB subfamily. The 4 large subunits of the cytochrome b6-f complex are cytochrome b6, subunit IV (17 kDa polypeptide, PetD), cytochrome f and the Rieske protein, while the 4 small subunits are PetG, PetL, PetM and PetN. The complex functions as a dimer. The cofactor is heme b. It depends on heme c as a cofactor.

It is found in the plastid. The protein localises to the chloroplast thylakoid membrane. Its function is as follows. Component of the cytochrome b6-f complex, which mediates electron transfer between photosystem II (PSII) and photosystem I (PSI), cyclic electron flow around PSI, and state transitions. The sequence is that of Cytochrome b6 from Physcomitrium patens (Spreading-leaved earth moss).